The sequence spans 211 residues: ATP phosphoribosyltransferase (211 aa).

It belongs to the ATP phosphoribosyltransferase family. Short subfamily. As to quaternary structure, heteromultimer composed of HisG and HisZ subunits.

It localises to the cytoplasm. The catalysed reaction is 1-(5-phospho-beta-D-ribosyl)-ATP + diphosphate = 5-phospho-alpha-D-ribose 1-diphosphate + ATP. Its pathway is amino-acid biosynthesis; L-histidine biosynthesis; L-histidine from 5-phospho-alpha-D-ribose 1-diphosphate: step 1/9. Catalyzes the condensation of ATP and 5-phosphoribose 1-diphosphate to form N'-(5'-phosphoribosyl)-ATP (PR-ATP). Has a crucial role in the pathway because the rate of histidine biosynthesis seems to be controlled primarily by regulation of HisG enzymatic activity. This is ATP phosphoribosyltransferase from Bacillus cereus (strain B4264).